Here is a 367-residue protein sequence, read N- to C-terminus: Chorismate synthase (367 aa).

Residues Arg-48 and Arg-54 each contribute to the NADP(+) site. Residues 125 to 127 (RSS), 238 to 239 (NA), Gly-278, 293 to 297 (KPTSS), and Arg-319 contribute to the FMN site.

Belongs to the chorismate synthase family. Homotetramer. It depends on FMNH2 as a cofactor.

It catalyses the reaction 5-O-(1-carboxyvinyl)-3-phosphoshikimate = chorismate + phosphate. It functions in the pathway metabolic intermediate biosynthesis; chorismate biosynthesis; chorismate from D-erythrose 4-phosphate and phosphoenolpyruvate: step 7/7. In terms of biological role, catalyzes the anti-1,4-elimination of the C-3 phosphate and the C-6 proR hydrogen from 5-enolpyruvylshikimate-3-phosphate (EPSP) to yield chorismate, which is the branch point compound that serves as the starting substrate for the three terminal pathways of aromatic amino acid biosynthesis. This reaction introduces a second double bond into the aromatic ring system. The sequence is that of Chorismate synthase from Xanthomonas campestris pv. campestris (strain 8004).